A 313-amino-acid polypeptide reads, in one-letter code: tRNA dimethylallyltransferase (313 aa).

Residue 11–18 (GPTASGKT) participates in ATP binding. 13–18 (TASGKT) contributes to the substrate binding site. Interaction with substrate tRNA regions lie at residues 36-39 (DSAL), 160-164 (QRINR), and 241-246 (RCVGYR).

It belongs to the IPP transferase family. As to quaternary structure, monomer. Mg(2+) is required as a cofactor.

The catalysed reaction is adenosine(37) in tRNA + dimethylallyl diphosphate = N(6)-dimethylallyladenosine(37) in tRNA + diphosphate. Functionally, catalyzes the transfer of a dimethylallyl group onto the adenine at position 37 in tRNAs that read codons beginning with uridine, leading to the formation of N6-(dimethylallyl)adenosine (i(6)A). The sequence is that of tRNA dimethylallyltransferase from Haemophilus ducreyi (strain 35000HP / ATCC 700724).